We begin with the raw amino-acid sequence, 684 residues long: PAN2-PAN3 deadenylation complex subunit PAN3 (684 aa).

Disordered regions lie at residues 1-38 (MLPP…RETA), 68-97 (DPST…PARE), and 112-146 (VPKG…STGL). Positions 21–38 (EKAKEKEKKHSPEKRETA) are enriched in basic and acidic residues. The C3H1-type zinc finger occupies 36 to 65 (ETAQRICRNVMIYGYCKYQDQGCIYYHPPA). Over residues 127-139 (VPTPSAPTPPVWP) the composition is skewed to pro residues. Positions 263 to 544 (GANGASAPGL…SIDEVVKMMG (282 aa)) are pseudokinase domain. ATP-binding positions include Arg-326 and 375-382 (DYHPLSTT). The disordered stretch occupies residues 387 to 412 (YLSPNPPEPSPASALANQPPKRRSSP). 444–445 (SK) serves as a coordination point for ATP. The stretch at 545–583 (PRILNELDAVQSYADVLENELGAEVENGRIVRLLTKLGF) forms a coiled coil. The interval 584-684 (INERAEFELD…NAGNNHRVHR (101 aa)) is knob domain.

This sequence belongs to the protein kinase superfamily. PAN3 family. In terms of assembly, homodimer. Forms a heterotrimer with a catalytic subunit PAN2 to form the poly(A)-nuclease (PAN) deadenylation complex. Interacts (via PAM-2 motif) with poly(A)-binding protein PAB1 (via PABC domain), conferring substrate specificity of the enzyme complex.

It localises to the cytoplasm. In terms of biological role, regulatory subunit of the poly(A)-nuclease (PAN) deadenylation complex, one of two cytoplasmic mRNA deadenylases involved in mRNA turnover. PAN specifically shortens poly(A) tails of RNA and the activity is stimulated by poly(A)-binding protein PAB1. PAN deadenylation is followed by rapid degradation of the shortened mRNA tails by the CCR4-NOT complex. Deadenylated mRNAs are then degraded by two alternative mechanisms, namely exosome-mediated 3'-5' exonucleolytic degradation, or deadenylation-dependent mRNA decaping and subsequent 5'-3' exonucleolytic degradation by XRN1. May also be involved in post-transcriptional maturation of mRNA poly(A) tails. PAN3 acts as a positive regulator for PAN activity, recruiting the catalytic subunit PAN2 to mRNA via its interaction with RNA and with PAB1. This Cryptococcus neoformans var. neoformans serotype D (strain B-3501A) (Filobasidiella neoformans) protein is PAN2-PAN3 deadenylation complex subunit PAN3.